The primary structure comprises 389 residues: uncharacterized protein (389 aa).

3 WD repeats span residues 11 to 53 (SFGS…QKIK), 146 to 186 (SHHD…EEDA), and 289 to 330 (AHGD…LDIP). S351 is modified (phosphoserine). Residues 361-389 (QKESVSTRPRKEKHKKAKKHSMKSRFKPY) form a disordered region. Residues 368–389 (RPRKEKHKKAKKHSMKSRFKPY) are compositionally biased toward basic residues.

This is an uncharacterized protein from Saccharomyces cerevisiae (strain ATCC 204508 / S288c) (Baker's yeast).